Here is a 71-residue protein sequence, read N- to C-terminus: Large ribosomal subunit protein uL29 (71 aa).

This sequence belongs to the universal ribosomal protein uL29 family.

In Halobacterium salinarum (strain ATCC 700922 / JCM 11081 / NRC-1) (Halobacterium halobium), this protein is Large ribosomal subunit protein uL29 (rpl29).